We begin with the raw amino-acid sequence, 434 residues long: NADH-quinone oxidoreductase subunit F 1 (434 aa).

G54–G63 is a binding site for NAD(+). G166–S213 contacts FMN. [4Fe-4S] cluster is bound by residues C345, C348, C351, and C391.

This sequence belongs to the complex I 51 kDa subunit family. Requires FMN as cofactor. [4Fe-4S] cluster serves as cofactor.

It carries out the reaction a quinone + NADH + 5 H(+)(in) = a quinol + NAD(+) + 4 H(+)(out). NDH-1 shuttles electrons from NADH, via FMN and iron-sulfur (Fe-S) centers, to quinones in the respiratory chain. The immediate electron acceptor for the enzyme in this species is believed to be ubiquinone. Couples the redox reaction to proton translocation (for every two electrons transferred, four hydrogen ions are translocated across the cytoplasmic membrane), and thus conserves the redox energy in a proton gradient. The chain is NADH-quinone oxidoreductase subunit F 1 (nuoF1) from Rhizobium meliloti (strain 1021) (Ensifer meliloti).